The chain runs to 508 residues: Anaerobic nitric oxide reductase transcription regulator NorR (508 aa).

At D56 the chain carries 4-aspartylphosphate. Positions M186–V415 constitute a Sigma-54 factor interaction domain. Residues G214 to E221 and A277 to E286 contribute to the ATP site. Residues W483–K502 constitute a DNA-binding region (H-T-H motif).

It functions in the pathway nitrogen metabolism; nitric oxide reduction. Functionally, required for the expression of anaerobic nitric oxide (NO) reductase, acts as a transcriptional activator for at least the norVW operon. Activation also requires sigma-54. The sequence is that of Anaerobic nitric oxide reductase transcription regulator NorR from Aeromonas hydrophila subsp. hydrophila (strain ATCC 7966 / DSM 30187 / BCRC 13018 / CCUG 14551 / JCM 1027 / KCTC 2358 / NCIMB 9240 / NCTC 8049).